The following is a 325-amino-acid chain: ATP synthase gamma chain (325 aa).

The protein belongs to the ATPase gamma chain family. In terms of assembly, F-type ATPases have 2 components, CF(1) - the catalytic core - and CF(0) - the membrane proton channel. CF(1) has five subunits: alpha(3), beta(3), gamma(1), delta(1), epsilon(1). CF(0) has three main subunits: a, b and c.

Its subcellular location is the cell membrane. Produces ATP from ADP in the presence of a proton gradient across the membrane. The gamma chain is believed to be important in regulating ATPase activity and the flow of protons through the CF(0) complex. This chain is ATP synthase gamma chain, found in Corynebacterium diphtheriae (strain ATCC 700971 / NCTC 13129 / Biotype gravis).